The following is a 176-amino-acid chain: Pituitary adenylate cyclase-activating polypeptide (176 aa).

A signal peptide spans 1-24 (MTMCSGARLALLVYGILMHSSVYG). Residues 25-80 (SPAASGLRFPGIRPENEVYDEDGNPQQDFYDSESLGVGSPASALRDAYALYYPAEE) constitute a propeptide that is removed on maturation. The interval 98 to 135 (QPSARRSPADAHGQGLGWDPGGSADDDSEPLSKRHSDG) is disordered. Residues 150 to 158 (VKKYLAAVL) are important for receptor binding. The residue at position 158 (L158) is a Leucine amide. K169 bears the Lysine amide mark. A propeptide spanning residues 173–176 (IPYL) is cleaved from the precursor.

Belongs to the glucagon family. As to quaternary structure, interacts with ADCYAP1R1 (via N-terminal extracellular domain); both PACAP27 and PACAP38 neuropeptides function as ligand for the ADCYAP1R1 receptor, which modulates the activity of downstream effectors. Interacts with VIPR1 and VIPR2; functions as ligand for VIPR1 and VIPR2 receptors, which modulate the activity of downstream effectors.

The protein resides in the secreted. Functionally, PACAP is a neuropeptide involved in diverse array of physiological processes through activating the PACAP subfamily of class B1 G protein-coupled receptors: VIP receptor 1 (VIPR1), VIP receptor 2 (VIPR2), and PACAP type I receptor (ADCYAP1R1). Exerts neuroprotective and general cytoprotective effects due to anti-apoptotic, anti-inflammatory, and antioxidant actions. Promotes neuron projection development through the RAPGEF2/Rap1/B-Raf/ERK pathway. In chromaffin cells, induces long-lasting increase of intracellular calcium concentrations and neuroendocrine secretion. Involved in the control of glucose homeostasis, induces insulin secretion by pancreatic beta cells. PACAP exists in two bioactive forms from proteolysis of the same precursor protein, PACAP27 and PACAP38, which differ by eleven amino acid residues in the C-terminus. This is Pituitary adenylate cyclase-activating polypeptide (ADCYAP1) from Bos taurus (Bovine).